A 638-amino-acid polypeptide reads, in one-letter code: Adhesion G-protein coupled receptor F2 (638 aa).

An N-terminal signal peptide occupies residues 1–25; the sequence is MISARWLYCLVLLLATESCRLFCQA. The Extracellular segment spans residues 26 to 386; it reads ASKSKENVMP…ESPVLTYITY (361 aa). Asn155, Asn219, Asn248, Asn293, and Asn311 each carry an N-linked (GlcNAc...) asparagine glycan. The GAIN-B domain maps to 233-377; sequence PRNSLGKNFT…SILMSPNTVE (145 aa). 2 cysteine pairs are disulfide-bonded: Cys329/Cys356 and Cys344/Cys358. The segment at 329 to 377 is GPS; the sequence is CVGWHSLESRWDRRACKMIQENSRQAICRCQPNKFFTSFSILMSPNTVE. The helical transmembrane segment at 387 to 407 threads the bilayer; the sequence is IGLGISICSLIICLAIEALVW. Residues 408–422 are Cytoplasmic-facing; sequence SQVTKTEISYLRHLC. Residues 423–443 traverse the membrane as a helical segment; it reads IANIAVTLLMADVWFIVASFL. The Extracellular portion of the chain corresponds to 444 to 465; sequence SGPIVHHNGCVTATFFVHFFYL. Residues 466 to 486 form a helical membrane-spanning segment; the sequence is SVFFWMLAKALLILYGILIVF. The Cytoplasmic segment spans residues 487-493; sequence HTLPKSC. The helical transmembrane segment at 494–514 threads the bilayer; it reads LVASLFTVGYGCPLVIAVITL. The Extracellular segment spans residues 515 to 541; sequence AVTEPGKGYLRPEACWLNWDMTKALLA. A helical transmembrane segment spans residues 542-562; the sequence is FVVPALAIVVVNLITVTLVII. Topologically, residues 563-586 are cytoplasmic; the sequence is KTQRAAVGSSMFQEVRAIVRICKN. The chain crosses the membrane as a helical span at residues 587–607; that stretch reads IAILTPLLGLTWGFGIATVVA. The Extracellular segment spans residues 608–610; the sequence is GHS. A helical transmembrane segment spans residues 611 to 631; the sequence is LAFHIIFSLLNALQVSPDAMI. The Cytoplasmic segment spans residues 632-638; that stretch reads ESEWRGC.

This sequence belongs to the G-protein coupled receptor 2 family. Adhesion G-protein coupled receptor (ADGR) subfamily.

The protein resides in the membrane. Orphan receptor. The chain is Adhesion G-protein coupled receptor F2 (Adgrf2) from Rattus norvegicus (Rat).